A 676-amino-acid chain; its full sequence is DNA ligase (676 aa).

NAD(+) contacts are provided by residues 34-38 (DAEYD), 84-85 (SL), and Glu-116. Lys-118 functions as the N6-AMP-lysine intermediate in the catalytic mechanism. Residues Arg-139, Glu-174, Lys-294, and Lys-318 each contribute to the NAD(+) site. Cys-412, Cys-415, Cys-428, and Cys-433 together coordinate Zn(2+). One can recognise a BRCT domain in the interval 589–676 (KGGEALKGLT…RTGKKAEELV (88 aa)).

It belongs to the NAD-dependent DNA ligase family. LigA subfamily. Mg(2+) serves as cofactor. It depends on Mn(2+) as a cofactor.

The catalysed reaction is NAD(+) + (deoxyribonucleotide)n-3'-hydroxyl + 5'-phospho-(deoxyribonucleotide)m = (deoxyribonucleotide)n+m + AMP + beta-nicotinamide D-nucleotide.. DNA ligase that catalyzes the formation of phosphodiester linkages between 5'-phosphoryl and 3'-hydroxyl groups in double-stranded DNA using NAD as a coenzyme and as the energy source for the reaction. It is essential for DNA replication and repair of damaged DNA. This chain is DNA ligase, found in Thermus thermophilus (strain ATCC 27634 / DSM 579 / HB8).